The following is an 84-amino-acid chain: Beta-defensin 119 (84 aa).

An N-terminal signal peptide occupies residues 1 to 21; it reads MKLLYLFLAILLAIEEPVISG. 3 cysteine pairs are disulfide-bonded: Cys28/Cys55, Cys35/Cys49, and Cys39/Cys56.

This sequence belongs to the beta-defensin family.

Its subcellular location is the secreted. Its function is as follows. Has antibacterial activity. This Hylobates lar (Lar gibbon) protein is Beta-defensin 119 (DEFB119).